We begin with the raw amino-acid sequence, 484 residues long: GTPase Obg (484 aa).

Residues 7–164 (PRFVDRVVIH…RDLTLELKTV (158 aa)) form the Obg domain. The segment at 21–43 (SGGNGCASVHREKFKPLGGPDGG) is disordered. In terms of domain architecture, OBG-type G spans 165-345 (ADVGLVGFPS…LIFGLSQMIS (181 aa)). Residues 171 to 178 (GFPSAGKS), 196 to 200 (FTTLV), 217 to 220 (DVPG), 297 to 300 (NKID), and 326 to 328 (STA) contribute to the GTP site. Mg(2+)-binding residues include Ser178 and Thr198. The OCT domain maps to 363 to 441 (PIPVDDSGFT…IGEMTFDWEP (79 aa)). A disordered region spans residues 439–484 (WEPQTPAGEPVAMSGRGTDPRLDSNKRVGAAERKAARSRRREHGDG). Positions 456 to 473 (TDPRLDSNKRVGAAERKA) are enriched in basic and acidic residues. Over residues 474-484 (ARSRRREHGDG) the composition is skewed to basic residues.

Belongs to the TRAFAC class OBG-HflX-like GTPase superfamily. OBG GTPase family. As to quaternary structure, monomer. Mg(2+) is required as a cofactor.

Its subcellular location is the cytoplasm. In terms of biological role, an essential GTPase which binds GTP, GDP and possibly (p)ppGpp with moderate affinity, with high nucleotide exchange rates and a fairly low GTP hydrolysis rate. Plays a role in control of the cell cycle, stress response, ribosome biogenesis and in those bacteria that undergo differentiation, in morphogenesis control. The sequence is that of GTPase Obg from Mycobacterium tuberculosis (strain CDC 1551 / Oshkosh).